The following is an 877-amino-acid chain: Clumping factor B (877 aa).

An N-terminal signal peptide occupies residues 1–44; the sequence is MKKRIDYLSNKQNKYSIRRFTVGTTSVIVGATILFGIGNHQAQA. The YSIRK-G/S signaling motif motif lies at 15-26; sequence YSIRRFTVGTTS. Composition is skewed to polar residues over residues 44-61 and 68-95; these read ASEQSNDTTQSSKNNASA and MIETPQLNTTANDTSDISANTNSANVDS. The interval 44-192 is disordered; that stretch reads ASEQSNDTTQ…QGTSKPSVRT (149 aa). Residues 45-542 are ligand binding A region; that stretch reads SEQSNDTTQS…GSADGDSAVN (498 aa). Over residues 96 to 119 the composition is skewed to low complexity; it reads TTKPMSTQTSNTTTTEPASTNETP. Over residues 120–189 the composition is skewed to polar residues; it reads QPTAIKNQAT…SNAQGTSKPS (70 aa). The short motif at 272 to 276 is the MIDAS-like motif element; it reads DYSNS. Residues 530–849 form a disordered region; sequence YGGGSADGDS…ETGDKSENTN (320 aa). Pro residues predominate over residues 545–555; that stretch reads DPTPGPPVDPE. Over residues 556–801 the composition is skewed to acidic residues; that stretch reads PSPDPEPEPT…SDSDSDSDSD (246 aa). Positions 805–816 are enriched in polar residues; the sequence is RVTPPNNEQKAP. A compositionally biased stretch (basic and acidic residues) spans 833–846; that stretch reads HKTDALPETGDKSE. The short motif at 838-842 is the LPXTG sorting signal element; that stretch reads LPETG. Thr841 is modified (pentaglycyl murein peptidoglycan amidated threonine). A propeptide spans 842–877 (removed by sortase); it reads GDKSENTNATLFGAMMALLGSLLLFRKRKQDHKEKA.

It belongs to the serine-aspartate repeat-containing protein (SDr) family. In terms of processing, proteolytically cleaved by aureolysin (aur). This cleavage leads to the inactivation of ClfB.

The protein resides in the secreted. It is found in the cell wall. Its function is as follows. Cell surface-associated protein implicated in virulence by promoting bacterial attachment to both alpha- and beta-chains of human fibrinogen and inducing the formation of bacterial clumps. Partly responsible for mediating bacterial attachment to the highly keratinized squamous epithelial cells from the nasal cavity via an interaction with cytokeratin K10 (K10). Also promotes bacterial attachment to cultured keratinocytes, possibly through an interaction with cytokeratin K10. Binds mouse cytokeratin K10. Activates human platelet aggregation. The chain is Clumping factor B (clfB) from Staphylococcus aureus (strain NCTC 8325 / PS 47).